The chain runs to 250 residues: Pyrroloquinoline-quinone synthase (250 aa).

This sequence belongs to the PqqC family.

The catalysed reaction is 6-(2-amino-2-carboxyethyl)-7,8-dioxo-1,2,3,4,7,8-hexahydroquinoline-2,4-dicarboxylate + 3 O2 = pyrroloquinoline quinone + 2 H2O2 + 2 H2O + H(+). It participates in cofactor biosynthesis; pyrroloquinoline quinone biosynthesis. In terms of biological role, ring cyclization and eight-electron oxidation of 3a-(2-amino-2-carboxyethyl)-4,5-dioxo-4,5,6,7,8,9-hexahydroquinoline-7,9-dicarboxylic-acid to PQQ. This is Pyrroloquinoline-quinone synthase from Xanthomonas campestris pv. campestris (strain B100).